A 360-amino-acid polypeptide reads, in one-letter code: S-adenosylmethionine:tRNA ribosyltransferase-isomerase (360 aa).

This sequence belongs to the QueA family. As to quaternary structure, monomer.

The protein resides in the cytoplasm. The enzyme catalyses 7-aminomethyl-7-carbaguanosine(34) in tRNA + S-adenosyl-L-methionine = epoxyqueuosine(34) in tRNA + adenine + L-methionine + 2 H(+). Its pathway is tRNA modification; tRNA-queuosine biosynthesis. Transfers and isomerizes the ribose moiety from AdoMet to the 7-aminomethyl group of 7-deazaguanine (preQ1-tRNA) to give epoxyqueuosine (oQ-tRNA). The polypeptide is S-adenosylmethionine:tRNA ribosyltransferase-isomerase (Burkholderia pseudomallei (strain 1106a)).